The primary structure comprises 501 residues: MAEEKYIMAIDQGTTSSRAIIFDKKGNKIGSSQKEFTQYFPNAGWVEHNANEIWNSVQSVIAGSLIESGVKPTDIAGIGITNQRETTVVWDKATGLPIYNAIVWQSRQTTPIADQLKEDGYSEMIHEKTGLIIDAYFSATKVRWILDHVEGAQERAENGELMFGTIDTWLVWKLTGDTHVTDYSNASRTMLFNIHDLDWDQEILDLLNIPRVMLPKVVSNSEVYGLTKNYHFYGSEVPIAGMAGDQQAALFGQMAFEPGMVKNTYGTGSFIVMNTGEEPQLSKNNLLTTIGYGINGKVYYALEGSIFVAGSAIQWLRDGLKMLQTAAESEAVAKASTGHNEVYVVPAFTGLGAPYWDSQARGAVFGLTRGTTREDFVKATLQAVAYQVRDIIDTMKEDTGIDIPVLKVDGGAANNDFLMQFQADILNTAVQRAHNLETTALGAAFLAGLAVGFWKDLEEIKAFQEEGQQFEPIMAEEEREDLYEGWQQAVAATQQFKRKNK.

Thr-14 is a binding site for ADP. Residues Thr-14, Thr-15, and Ser-16 each coordinate ATP. Thr-14 is a sn-glycerol 3-phosphate binding site. An ADP-binding site is contributed by Arg-18. Residues Arg-84, Glu-85, and Tyr-136 each contribute to the sn-glycerol 3-phosphate site. Glycerol contacts are provided by Arg-84, Glu-85, and Tyr-136. His-231 carries the phosphohistidine; by HPr modification. Asp-245 contacts sn-glycerol 3-phosphate. Positions 245 and 246 each coordinate glycerol. ADP is bound by residues Thr-267 and Gly-310. ATP-binding residues include Thr-267, Gly-310, Gln-314, and Gly-411. 2 residues coordinate ADP: Gly-411 and Asn-415.

It belongs to the FGGY kinase family. As to quaternary structure, homotetramer and homodimer (in equilibrium). In terms of processing, the phosphoenolpyruvate-dependent sugar phosphotransferase system (PTS), including enzyme I, and histidine-containing protein (HPr) are required for the phosphorylation of His-231, which leads to the activation of the enzyme.

The catalysed reaction is glycerol + ATP = sn-glycerol 3-phosphate + ADP + H(+). It functions in the pathway polyol metabolism; glycerol degradation via glycerol kinase pathway; sn-glycerol 3-phosphate from glycerol: step 1/1. Activated by phosphorylation and inhibited by fructose 1,6-bisphosphate (FBP). Functionally, key enzyme in the regulation of glycerol uptake and metabolism. Catalyzes the phosphorylation of glycerol to yield sn-glycerol 3-phosphate. This Enterococcus faecalis (strain ATCC 700802 / V583) protein is Glycerol kinase.